Reading from the N-terminus, the 771-residue chain is Dol-P-Glc:Glc(2)Man(9)GlcNAc(2)-PP-Dol alpha-1,2-glucosyltransferase (771 aa).

Transmembrane regions (helical) follow at residues 45–65, 160–180, 182–202, 221–241, 293–313, 326–346, and 357–377; these read FITA…LALV, VSFY…IFFF, GLYY…WNHL, VVLG…VVVY, VDMA…IAAL, HITI…VVLG, and LPQM…LLIP. The interval 392–449 is disordered; sequence TPTPSHTTTKDPGRSSWRFTKPSITSKKSSTTKPPQRSGPTPASSSSSSSSFSPDTNS. 2 stretches are compositionally biased toward low complexity: residues 411-426 and 435-449; these read TKPS…TKPP and SSSS…DTNS. An N-linked (GlcNAc...) asparagine glycan is attached at N448. A run of 2 helical transmembrane segments spans residues 469–489 and 503–525; these read PFYL…NTII and YIFR…AYTL. A compositionally biased stretch (basic and acidic residues) spans 584–593; that stretch reads QKNIKDKQKE. The segment at 584 to 605 is disordered; that stretch reads QKNIKDKQKEVEEEEEEEEKED. Residues 594–604 show a composition bias toward acidic residues; that stretch reads VEEEEEEEEKE. The next 2 membrane-spanning stretches (helical) occupy residues 631–651 and 656–676; these read TSTV…APLV and FILP…SSSL. The segment at 682-708 is disordered; it reads SSSFASSTTESGNGDGNDAATAARQQQ. The chain crosses the membrane as a helical span at residues 728–748; the sequence is LALETVWFLAINIGTMYMFLF.

The protein belongs to the ALG10 glucosyltransferase family.

It is found in the endoplasmic reticulum membrane. It carries out the reaction an alpha-D-Glc-(1-&gt;3)-alpha-D-Glc-(1-&gt;3)-alpha-D-Man-(1-&gt;2)-alpha-D-Man-(1-&gt;2)-alpha-D-Man-(1-&gt;3)-[alpha-D-Man-(1-&gt;2)-alpha-D-Man-(1-&gt;3)-[alpha-D-Man-(1-&gt;2)-alpha-D-Man-(1-&gt;6)]-alpha-D-Man-(1-&gt;6)]-beta-D-Man-(1-&gt;4)-beta-D-GlcNAc-(1-&gt;4)-alpha-D-GlcNAc-diphospho-di-trans,poly-cis-dolichol + a di-trans,poly-cis-dolichyl beta-D-glucosyl phosphate = a alpha-D-Glc-(1-&gt;2)-alpha-D-Glc-(1-&gt;3)-alpha-D-Glc-(1-&gt;3)-alpha-D-Man-(1-&gt;2)-alpha-D-Man-(1-&gt;2)-alpha-D-Man-(1-&gt;3)-[alpha-D-Man-(1-&gt;2)-alpha-D-Man-(1-&gt;3)-[alpha-D-Man-(1-&gt;2)-alpha-D-Man-(1-&gt;6)]-alpha-D-Man-(1-&gt;6)]-beta-D-Man-(1-&gt;4)-beta-D-GlcNAc-(1-&gt;4)-alpha-D-GlcNAc-diphospho-di-trans,poly-cis-dolichol + a di-trans,poly-cis-dolichyl phosphate + H(+). Its pathway is protein modification; protein glycosylation. Its function is as follows. Dol-P-Glc:Glc(2)Man(9)GlcNAc(2)-PP-Dol alpha-1,2-glucosyltransferase that operates in the biosynthetic pathway of dolichol-linked oligosaccharides, the glycan precursors employed in protein asparagine (N)-glycosylation. The assembly of dolichol-linked oligosaccharides begins on the cytosolic side of the endoplasmic reticulum membrane and finishes in its lumen. The sequential addition of sugars to dolichol pyrophosphate produces dolichol-linked oligosaccharides containing fourteen sugars, including two GlcNAcs, nine mannoses and three glucoses. Once assembled, the oligosaccharide is transferred from the lipid to nascent proteins by oligosaccharyltransferases. In the lumen of the endoplasmic reticulum, adds the third and last glucose residue from dolichyl phosphate glucose (Dol-P-Glc) onto the lipid-linked oligosaccharide intermediate Glc(2)Man(9)GlcNAc(2)-PP-Dol to produce Glc(3)Man(9)GlcNAc(2)-PP-Dol. In Neurospora crassa (strain ATCC 24698 / 74-OR23-1A / CBS 708.71 / DSM 1257 / FGSC 987), this protein is Dol-P-Glc:Glc(2)Man(9)GlcNAc(2)-PP-Dol alpha-1,2-glucosyltransferase (alg-10).